A 457-amino-acid chain; its full sequence is Oxygen-independent coproporphyrinogen III oxidase (457 aa).

The Radical SAM core domain occupies R47 to A280. Residue Y56 coordinates S-adenosyl-L-methionine. [4Fe-4S] cluster is bound by residues C62 and C66. An S-adenosyl-L-methionine-binding site is contributed by F68. A [4Fe-4S] cluster-binding site is contributed by C69. S-adenosyl-L-methionine-binding positions include G112, G113–T114, E145, Q172, R184, D209, A243, and I329.

This sequence belongs to the anaerobic coproporphyrinogen-III oxidase family. In terms of assembly, monomer. [4Fe-4S] cluster is required as a cofactor.

The protein resides in the cytoplasm. It carries out the reaction coproporphyrinogen III + 2 S-adenosyl-L-methionine = protoporphyrinogen IX + 2 5'-deoxyadenosine + 2 L-methionine + 2 CO2. The protein operates within porphyrin-containing compound metabolism; protoporphyrin-IX biosynthesis; protoporphyrinogen-IX from coproporphyrinogen-III (AdoMet route): step 1/1. Functionally, involved in the heme biosynthesis. Catalyzes the anaerobic oxidative decarboxylation of propionate groups of rings A and B of coproporphyrinogen III to yield the vinyl groups in protoporphyrinogen IX. This is Oxygen-independent coproporphyrinogen III oxidase (hemN) from Salmonella typhi.